The primary structure comprises 461 residues: MSMTGSSAYYVAHAIPPFLRLSNKTMLLLSTPPTTFFPTSTTPRVTLLSSTSSSSSSSISLRSSTAPSPSCSSVTPKDNCLASAKHSPPNMSASVSSRTFLNAQSEQDVFAGIKKEVEAGSLPANVAAGMEEVYNNYKKAVIQSGDPKANEIVLSNMIALLDRVFLDVTDPFVFQPHHKAKREPFDYYVFGQNYIRPLVDFKNAYVGNMPLFIEMEEKLKQGHNIILMSNHQTEADPAIISLLLETRLPYIAENLTYVAGDRVITDPLSKPFSIGRNLICVYSKKHMLDDPALVEMKRTANIRALKEMAMLLRNGSQLVWIAPSGGRDRPDAQTREWVPAPFDISSVDNMRRLVEHSGPPGHVYPLAILCHDIMPPPLKVEKEIGEKRIICFHGAGISVAPAISFSETTATCENPEKAKEVFSKALYNSVTEQYNVLKSAIQGKKGFEASTPVVTLSQPWK.

Residues 1–96 (MSMTGSSAYY…SPPNMSASVS (96 aa)) constitute a chloroplast transit peptide. Positions 47 to 76 (LLSSTSSSSSSSISLRSSTAPSPSCSSVTP) are enriched in low complexity. The tract at residues 47-88 (LLSSTSSSSSSSISLRSSTAPSPSCSSVTPKDNCLASAKHSP) is disordered. Residues 231-236 (HQTEAD) carry the HXXXXD motif motif.

It belongs to the GPAT/DAPAT family.

It is found in the plastid. Its subcellular location is the chloroplast stroma. It carries out the reaction sn-glycerol 3-phosphate + an acyl-CoA = a 1-acyl-sn-glycero-3-phosphate + CoA. It functions in the pathway phospholipid metabolism; CDP-diacylglycerol biosynthesis; CDP-diacylglycerol from sn-glycerol 3-phosphate: step 1/3. Functionally, esterifies acyl-group from acyl-ACP to the sn-1 position of glycerol-3-phosphate. The enzyme from chilling-resistant plants discriminates against non-fluid palmitic acid and selects oleic acid whereas the enzyme from sensitive plants accepts both fatty acids. This chain is Glycerol-3-phosphate acyltransferase, chloroplastic (PLSB), found in Phaseolus vulgaris (Kidney bean).